The chain runs to 114 residues: Ribonuclease P protein component (114 aa).

It belongs to the RnpA family. Consists of a catalytic RNA component (M1 or rnpB) and a protein subunit.

It carries out the reaction Endonucleolytic cleavage of RNA, removing 5'-extranucleotides from tRNA precursor.. RNaseP catalyzes the removal of the 5'-leader sequence from pre-tRNA to produce the mature 5'-terminus. It can also cleave other RNA substrates such as 4.5S RNA. The protein component plays an auxiliary but essential role in vivo by binding to the 5'-leader sequence and broadening the substrate specificity of the ribozyme. The polypeptide is Ribonuclease P protein component (Alkaliphilus oremlandii (strain OhILAs) (Clostridium oremlandii (strain OhILAs))).